Consider the following 704-residue polypeptide: Penicillin-binding protein H (704 aa).

The helical transmembrane segment at 23-43 (FFLAVFVLFTALIFKLGVVQI) threads the bilayer. Residues 197 to 223 (MNPNKSNSNGKNGALLDEKKNSSQRPK) form a disordered region. Low complexity predominate over residues 200 to 209 (NKSNSNGKNG). The span at 212–223 (LDEKKNSSQRPK) shows a compositional bias: basic and acidic residues. Ser415 functions as the Acyl-ester intermediate in the catalytic mechanism.

The protein belongs to the transpeptidase family.

Its subcellular location is the cell membrane. The catalysed reaction is Preferential cleavage: (Ac)2-L-Lys-D-Ala-|-D-Ala. Also transpeptidation of peptidyl-alanyl moieties that are N-acyl substituents of D-alanine.. It participates in cell wall biogenesis; peptidoglycan biosynthesis. In terms of biological role, involved in the polymerization of peptidoglycan. Plays a redundant role with PBP-2A (pbpA) in determining the rod shape of the cell during vegetative growth and spore outgrowth. The sequence is that of Penicillin-binding protein H from Bacillus subtilis (strain 168).